A 208-amino-acid chain; its full sequence is N-(5'-phosphoribosyl)anthranilate isomerase (208 aa).

The protein belongs to the TrpF family.

The enzyme catalyses N-(5-phospho-beta-D-ribosyl)anthranilate = 1-(2-carboxyphenylamino)-1-deoxy-D-ribulose 5-phosphate. The protein operates within amino-acid biosynthesis; L-tryptophan biosynthesis; L-tryptophan from chorismate: step 3/5. This chain is N-(5'-phosphoribosyl)anthranilate isomerase, found in Desulforamulus reducens (strain ATCC BAA-1160 / DSM 100696 / MI-1) (Desulfotomaculum reducens).